The following is a 193-amino-acid chain: MTETLETPATKIVPRLKTKYAESIKATLQDEFKYENVNQVPRLVKVVVNMGVGDAAKDSKLIDGAVRDLTQITGQKPQVTKARKSIAQFKLREGMPIGAHATLRGDRMWEFVDRLVSLALPRIRDFRGLSGKQFDGNGNYTFGLTEQVMFHEIDQDKIDRVRGMDITVVTTAKTDDEGRALLKALGFPFKTEA.

It belongs to the universal ribosomal protein uL5 family. Part of the 50S ribosomal subunit; part of the 5S rRNA/L5/L18/L25 subcomplex. Contacts the 5S rRNA and the P site tRNA. Forms a bridge to the 30S subunit in the 70S ribosome.

Functionally, this is one of the proteins that bind and probably mediate the attachment of the 5S RNA into the large ribosomal subunit, where it forms part of the central protuberance. In the 70S ribosome it contacts protein S13 of the 30S subunit (bridge B1b), connecting the 2 subunits; this bridge is implicated in subunit movement. Contacts the P site tRNA; the 5S rRNA and some of its associated proteins might help stabilize positioning of ribosome-bound tRNAs. This chain is Large ribosomal subunit protein uL5, found in Pseudarthrobacter chlorophenolicus (strain ATCC 700700 / DSM 12829 / CIP 107037 / JCM 12360 / KCTC 9906 / NCIMB 13794 / A6) (Arthrobacter chlorophenolicus).